Consider the following 201-residue polypeptide: Small ribosomal subunit protein uS4c (201 aa).

The segment at 15-43 (LGALPGLTRKRPRSGSDLRNQSRSGKRSQ) is disordered. One can recognise an S4 RNA-binding domain in the interval 89–150 (MRLDNILFRL…EQRSRALIQN (62 aa)).

Belongs to the universal ribosomal protein uS4 family. Part of the 30S ribosomal subunit. Contacts protein S5. The interaction surface between S4 and S5 is involved in control of translational fidelity.

The protein localises to the plastid. It is found in the chloroplast. Functionally, one of the primary rRNA binding proteins, it binds directly to 16S rRNA where it nucleates assembly of the body of the 30S subunit. In terms of biological role, with S5 and S12 plays an important role in translational accuracy. This is Small ribosomal subunit protein uS4c (rps4) from Drimys granadensis.